The primary structure comprises 122 residues: Aspartate 1-decarboxylase (122 aa).

Residue Ser-25 is the Schiff-base intermediate with substrate; via pyruvic acid of the active site. Pyruvic acid (Ser) is present on Ser-25. Thr-57 contacts substrate. Tyr-58 acts as the Proton donor in catalysis. Gly-73–Ala-75 contributes to the substrate binding site.

This sequence belongs to the PanD family. Heterooctamer of four alpha and four beta subunits. Pyruvate is required as a cofactor. Is synthesized initially as an inactive proenzyme, which is activated by self-cleavage at a specific serine bond to produce a beta-subunit with a hydroxyl group at its C-terminus and an alpha-subunit with a pyruvoyl group at its N-terminus.

It localises to the cytoplasm. The enzyme catalyses L-aspartate + H(+) = beta-alanine + CO2. It functions in the pathway cofactor biosynthesis; (R)-pantothenate biosynthesis; beta-alanine from L-aspartate: step 1/1. Its function is as follows. Catalyzes the pyruvoyl-dependent decarboxylation of aspartate to produce beta-alanine. In Bordetella avium (strain 197N), this protein is Aspartate 1-decarboxylase.